The following is a 257-amino-acid chain: Thiazole synthase (257 aa).

The active-site Schiff-base intermediate with DXP is the lysine 99. 1-deoxy-D-xylulose 5-phosphate-binding positions include glycine 160, 186 to 187, and 208 to 209; these read AG and NT.

This sequence belongs to the ThiG family. Homotetramer. Forms heterodimers with either ThiH or ThiS.

The protein resides in the cytoplasm. The catalysed reaction is [ThiS sulfur-carrier protein]-C-terminal-Gly-aminoethanethioate + 2-iminoacetate + 1-deoxy-D-xylulose 5-phosphate = [ThiS sulfur-carrier protein]-C-terminal Gly-Gly + 2-[(2R,5Z)-2-carboxy-4-methylthiazol-5(2H)-ylidene]ethyl phosphate + 2 H2O + H(+). It functions in the pathway cofactor biosynthesis; thiamine diphosphate biosynthesis. Its function is as follows. Catalyzes the rearrangement of 1-deoxy-D-xylulose 5-phosphate (DXP) to produce the thiazole phosphate moiety of thiamine. Sulfur is provided by the thiocarboxylate moiety of the carrier protein ThiS. In vitro, sulfur can be provided by H(2)S. This Thermodesulfovibrio yellowstonii (strain ATCC 51303 / DSM 11347 / YP87) protein is Thiazole synthase.